A 247-amino-acid polypeptide reads, in one-letter code: MGGKKFGTNSKAEEARSKKAEVKKNENEKKQRDKEDKMWEETDTKILDKQKKQKEKEEKAREDAKKKQEAKELLQQEDKEIKERYGKPSDTKVTRFEIQQKRDKEQKQREKELASRPSDPRVVVVPTTTTTTTTTTTTTTGSDDHEEEDFNLEENMNHILREQRLKDGKDVIDARDINEAIGALSGNDGKEQHPERRMKAAFNAYEEENLPVLRKENPSLRLTQVKQLLWKNWLKAPENPFNQVGSQ.

The segment at 1–146 (MGGKKFGTNS…TTTTGSDDHE (146 aa)) is disordered. Positions 8–85 (TNSKAEEARS…QEDKEIKERY (78 aa)) form a coiled coil. The span at 11 to 114 (KAEEARSKKA…EQKQREKELA (104 aa)) shows a compositional bias: basic and acidic residues. Over residues 122–140 (VVVVPTTTTTTTTTTTTTT) the composition is skewed to low complexity.

Belongs to the CCDC124 family. In terms of assembly, associates with translationally inactive ribosomes in the nonrotated state.

In terms of biological role, ribosome-binding protein involved in ribosome hibernation: associates with translationally inactive ribosomes and stabilizes the nonrotated conformation of the 80S ribosome, thereby promoting ribosome preservation and storage. The polypeptide is Coiled-coil domain-containing protein 124 homolog (Dictyostelium discoideum (Social amoeba)).